We begin with the raw amino-acid sequence, 441 residues long: Chitinase-like protein Idgf3 (441 aa).

Residues 1–23 form the signal peptide; it reads MSGSLWLSLALSLAVLAQFKVSA. Positions 25–441 constitute a GH18 domain; sequence PNLVCFYDSQ…MLRAIKYRLL (417 aa). An intrachain disulfide couples Cys-29 to Cys-56. An N-linked (GlcNAc...) asparagine glycan is attached at Asn-221. The tract at residues 310–331 is disordered; the sequence is GDSGMPVVSSTQGPAPAGPQSK. Cys-342 and Cys-425 form a disulfide bridge.

Belongs to the glycosyl hydrolase 18 family. IDGF subfamily. Post-translationally, glycosylated.

Its subcellular location is the secreted. In terms of biological role, cooperates with insulin-like peptides to stimulate the proliferation, polarization and motility of imaginal disk cells. May act by stabilizing the binding of insulin-like peptides to its receptor through a simultaneous interaction with both molecules to form a multiprotein signaling complex. The polypeptide is Chitinase-like protein Idgf3 (Idgf3) (Drosophila simulans (Fruit fly)).